A 111-amino-acid chain; its full sequence is Large ribosomal subunit protein uL22 (111 aa).

The protein belongs to the universal ribosomal protein uL22 family. As to quaternary structure, part of the 50S ribosomal subunit.

Functionally, this protein binds specifically to 23S rRNA; its binding is stimulated by other ribosomal proteins, e.g. L4, L17, and L20. It is important during the early stages of 50S assembly. It makes multiple contacts with different domains of the 23S rRNA in the assembled 50S subunit and ribosome. The globular domain of the protein is located near the polypeptide exit tunnel on the outside of the subunit, while an extended beta-hairpin is found that lines the wall of the exit tunnel in the center of the 70S ribosome. In Fusobacterium nucleatum subsp. nucleatum (strain ATCC 25586 / DSM 15643 / BCRC 10681 / CIP 101130 / JCM 8532 / KCTC 2640 / LMG 13131 / VPI 4355), this protein is Large ribosomal subunit protein uL22.